A 200-amino-acid chain; its full sequence is Blue fluorescence protein (200 aa).

Lumazine-binding repeat units follow at residues 1–111 (MFKG…TGGR) and 112–200 (SLSG…AGNW).

In terms of assembly, monomer.

It is found in the cytoplasm. In terms of biological role, blue fluorescence protein (BFP) that can bind 6,7-dimethyl-8-ribityllumazine, riboflavin, and 6-methyl-7-oxo-8-ribityllumazine as a bound fluorophore. Has no riboflavin-synthase activity. This Aliivibrio fischeri (Vibrio fischeri) protein is Blue fluorescence protein.